Here is a 65-residue protein sequence, read N- to C-terminus: Gallinacin-1 alpha (65 aa).

Positions 1–19 (MRIVYLLLPFILLLAQGAA) are cleaved as a signal peptide. Residues 20–25 (GSSQAL) constitute a propeptide that is removed on maturation. Intrachain disulfides connect cysteine 31-cysteine 59, cysteine 38-cysteine 53, and cysteine 43-cysteine 60.

Belongs to the beta-defensin family.

It is found in the secreted. It localises to the cytoplasmic granule. Its function is as follows. Has bactericidal activity. Potent activity against E.coli ML-35, L.monocytogenes EGD and C.albicans. The polypeptide is Gallinacin-1 alpha (Gallus gallus (Chicken)).